The sequence spans 405 residues: Diaminopimelate decarboxylase (405 aa).

Lys46 carries the N6-(pyridoxal phosphate)lysine modification. Residues Gly225 and 259–262 (EPGR) each bind pyridoxal 5'-phosphate. Positions 262, 298, and 302 each coordinate substrate. Cys329 acts as the Proton donor in catalysis. Substrate contacts are provided by Glu330 and Tyr358. Tyr358 contributes to the pyridoxal 5'-phosphate binding site.

This sequence belongs to the Orn/Lys/Arg decarboxylase class-II family. LysA subfamily. As to quaternary structure, homodimer. Pyridoxal 5'-phosphate serves as cofactor.

It catalyses the reaction meso-2,6-diaminopimelate + H(+) = L-lysine + CO2. It participates in amino-acid biosynthesis; L-lysine biosynthesis via DAP pathway; L-lysine from DL-2,6-diaminopimelate: step 1/1. Its function is as follows. Specifically catalyzes the decarboxylation of meso-diaminopimelate (meso-DAP) to L-lysine. This is Diaminopimelate decarboxylase from Helicobacter pylori (Campylobacter pylori).